Reading from the N-terminus, the 202-residue chain is Alpha-latrotoxin-Lm1a (202 aa).

ANK repeat units lie at residues 95–109, 110–120, 122–132, 133–138, 142–161, 163–170, 171–182, Lys-184, 185–191, and 193–202; these read LYNAASNPDSAVGFK, LMESPEININE, NDWPVASTLLR, SSNVNV, NSDTPLNLAYFIDQGADINT, NGHLNIVK, YLVEEEDLSVDG, YGIDMTI, and TALDIATDLK. The 4C4.1 epitope stretch occupies residues 175 to 181; sequence EEDLSVD.

This sequence belongs to the cationic peptide 01 (latrotoxin) family. 03 (alpha-latrotoxin) subfamily. As to quaternary structure, homotetramer in membranes. In terms of processing, processed by furin-like proteases at both the N- and C-termini. Post-translationally, contains 1 disulfide bond. Expressed in venom gland, cephalothorax, and abdomen tissues from both males and females.

It localises to the secreted. The protein localises to the target cell membrane. Presynaptic neurotoxin that causes massive release of neurotransmitters from vertebrate (but not invertebrate) nerve terminals and endocrine cells via a complex mechanism involving activation of receptor(s) and toxin insertion into the plasma membrane with subsequent pore formation. Binds to neurexin-1-alpha (NRXN1) in a calcium dependent manner, adhesion G protein-coupled receptor L1 (ADGRL1, also termed latrophilin-1 and calcium-independent receptor of latrotoxin (CIRL)), and receptor-type tyrosine-protein phosphatase S (PTPRS), also termed PTP sigma. NRXN1 and PTPRS are suggested to provide a platform for binding and subsequent pore formation events. In contrast, binding to ADGRL1 does not involve oligomerization and channel formation, but direct downstream stimulation of the synaptic fusion machinery. This is Alpha-latrotoxin-Lm1a from Latrodectus mactans (Black widow spider).